The primary structure comprises 537 residues: MADTIHWADVIAEDVLKKSGKHLVATGITPSGNIHIGNMREVVTADAVYRALSNKGANADFIYIADNYDPLRKVYPFLPESYVEHVGKPISEIPCPCGNCANYAEHFLKPFLEALRRLGINPQVYRADEMYKTGKYTEAIKTALVKRDAIAKILEEVSGKTVAADWSPFNPRCNQCGKITTTKVTGFDLEAETVDYVCACGHSGIVPMAGGGKLTWRVDWPARWSVLGVTVEPFGKDHASKGGSYDTGKRIVREIFGHEPPYPIVYEWIMLGKQGAMSSSTGVVISISDMLEIIPPEVLRYLIIRTKPEKHIQFDPGQPLLTLVDEYERLRTQFRENDPSLGTFQKRVYELSRATGICQSEIPFKQMVTIYQVARGDFAQILKIVKRSGFSTEDKKCIKELADNVSKWLKLYAPPFAKFKVKEKVPVQAATLSELQRAFLSAFAALIESRGEISGEEYHMLVYSAKDEGSELNRKIAEKLNTHAPQVDPRELFKAIYFSLLGQKSGPKAGWFLSSFDKEFLVERFEEASNYSPEKQA.

A 'HIGH' region motif is present at residues P30 to N38. Residues A276–S280 carry the 'KMSKS' region motif.

The protein belongs to the class-I aminoacyl-tRNA synthetase family.

Its subcellular location is the cytoplasm. It carries out the reaction tRNA(Lys) + L-lysine + ATP = L-lysyl-tRNA(Lys) + AMP + diphosphate. This Methanosarcina barkeri (strain Fusaro / DSM 804) protein is Lysine--tRNA ligase.